Consider the following 716-residue polypeptide: RNA-directed RNA polymerase catalytic subunit (716 aa).

Residues Ser-286–Ile-465 enclose the RdRp catalytic domain.

It belongs to the influenza viruses polymerase PB1 family. As to quaternary structure, RNA polymerase is composed of three subunits: PA, PB1 and PB2.

The catalysed reaction is RNA(n) + a ribonucleoside 5'-triphosphate = RNA(n+1) + diphosphate. The chain is RNA-directed RNA polymerase catalytic subunit (P2) from Dhori virus (strain Indian/1313/61) (Dho).